The following is a 391-amino-acid chain: Pyoverdine export membrane fusion protein PvdR (391 aa).

Residues 1–24 (MRRTRSTRRALLVAVCLSPLIALA) form the signal peptide. Positions 108 to 180 (IEMLKAQLAE…QASLRSDEAE (73 aa)) form a coiled coil. A disordered region spans residues 263–289 (LPVPPKPLDQSNQGGGSPTSGSGGQSG). Positions 275–289 (QGGGSPTSGSGGQSG) are enriched in gly residues.

It belongs to the membrane fusion protein (MFP) (TC 8.A.1) family. As to quaternary structure, part of the tripartite efflux system PvdRT-OpmQ, which is composed of an inner membrane component with both ATPase and permease domains, PvdT, a periplasmic membrane fusion protein, PvdR, and an outer membrane component, OpmQ.

It localises to the periplasm. Part of the tripartite efflux system PvdRT-OpmQ required for the secretion into the extracellular milieu of the siderophore pyoverdine (PVD), which is involved in iron acquisition. This subunit is an adapter protein that stimulates the ATPase activity of PvdT and connects the inner and outer membrane components. The system is responsible for export of newly synthesized PVD after the final steps of biosynthesis have taken place in the periplasm. It is also responsible for recycling of PVD after internalization of ferri-PVD into the periplasm by the outer-membrane receptor FpvA and release of iron from PVD, thus making PVD available for new cycles of iron uptake. In addition, can expel unwanted metals complexed with PVD from the periplasm into the extracellular medium. Does not contribute to resistance to antibiotics belonging to the classes of tetracyclines, aminoglycosides, beta-lactams and macrolides, and chloramphenicol. The sequence is that of Pyoverdine export membrane fusion protein PvdR from Pseudomonas aeruginosa (strain ATCC 15692 / DSM 22644 / CIP 104116 / JCM 14847 / LMG 12228 / 1C / PRS 101 / PAO1).